The following is a 525-amino-acid chain: Calcium uptake protein 1 homolog, mitochondrial (525 aa).

The interval 109-146 is disordered; sequence ADAGQRPSSAADVNGEDKSSESESEDSEDEEAGSDLHL. Residues 130–141 are compositionally biased toward acidic residues; that stretch reads SESEDSEDEEAG. EF-hand domains follow at residues 268–303 and 459–494; these read ISRR…VRQQ and LSDH…RVQR. Asp-281, Asn-283, Asp-285, Asp-287, Glu-292, Asp-472, Asn-474, Asp-476, Gln-478, and Glu-483 together coordinate Ca(2+).

It belongs to the MICU1 family. MICU1 subfamily.

It localises to the mitochondrion intermembrane space. The protein resides in the mitochondrion inner membrane. In terms of biological role, calcium sensor of the mitochondrial calcium uniporter (MCU) channel, which senses calcium level via its EF-hand domains. At low calcium levels, MICU1 occludes the pore of the MCU channel, preventing mitochondrial calcium uptake. At higher calcium levels, calcium-binding to MICU1 induces a conformational change that weakens MCU-MICU1 interactions and moves MICU1 away from the pore, allowing calcium permeation through the MCU channel. Also required to protect against manganese toxicity by preventing manganese uptake by MCU. During development, required in alpha/beta or gamma mushroom body neurons to support olfactory intermediate-term memory in the adult. The sequence is that of Calcium uptake protein 1 homolog, mitochondrial from Drosophila melanogaster (Fruit fly).